A 158-amino-acid chain; its full sequence is Small ribosomal subunit protein uS7 (158 aa).

It belongs to the universal ribosomal protein uS7 family. As to quaternary structure, part of the 30S ribosomal subunit. Contacts proteins S9 and S11.

In terms of biological role, one of the primary rRNA binding proteins, it binds directly to 16S rRNA where it nucleates assembly of the head domain of the 30S subunit. Is located at the subunit interface close to the decoding center, probably blocks exit of the E-site tRNA. The protein is Small ribosomal subunit protein uS7 of Porphyromonas gingivalis (strain ATCC BAA-308 / W83).